A 174-amino-acid chain; its full sequence is 3-hydroxydecanoyl-[acyl-carrier-protein] dehydratase (174 aa).

His73 is a catalytic residue.

It belongs to the thioester dehydratase family. FabA subfamily. As to quaternary structure, homodimer.

Its subcellular location is the cytoplasm. It catalyses the reaction a (3R)-hydroxyacyl-[ACP] = a (2E)-enoyl-[ACP] + H2O. It carries out the reaction (3R)-hydroxydecanoyl-[ACP] = (2E)-decenoyl-[ACP] + H2O. The enzyme catalyses (2E)-decenoyl-[ACP] = (3Z)-decenoyl-[ACP]. It participates in lipid metabolism; fatty acid biosynthesis. In terms of biological role, necessary for the introduction of cis unsaturation into fatty acids. Catalyzes the dehydration of (3R)-3-hydroxydecanoyl-ACP to E-(2)-decenoyl-ACP and then its isomerization to Z-(3)-decenoyl-ACP. Can catalyze the dehydratase reaction for beta-hydroxyacyl-ACPs with saturated chain lengths up to 16:0, being most active on intermediate chain length. This is 3-hydroxydecanoyl-[acyl-carrier-protein] dehydratase from Saccharophagus degradans (strain 2-40 / ATCC 43961 / DSM 17024).